An 811-amino-acid chain; its full sequence is N-terminal acetyltransferase B complex subunit arm1 (811 aa).

Belongs to the MDM20/NAA25 family. Component of the N-terminal acetyltransferase B (NatB) complex.

It localises to the cytoplasm. In terms of biological role, non-catalytic subunit of the NatB N-terminal acetyltransferase, which catalyzes acetylation of the amino-terminal methionine residues of all proteins beginning with Met-Asp or Met-Glu and of some proteins beginning with Met-Asn or Met-Met. This is N-terminal acetyltransferase B complex subunit arm1 (arm1) from Schizosaccharomyces pombe (strain 972 / ATCC 24843) (Fission yeast).